Consider the following 336-residue polypeptide: UDP-N-acetylglucosamine--N-acetylmuramyl-(pentapeptide) pyrophosphoryl-undecaprenol N-acetylglucosamine transferase (336 aa).

Positions 102, 144, 172, and 264 each coordinate UDP-N-acetyl-alpha-D-glucosamine.

The protein belongs to the glycosyltransferase 28 family. MurG subfamily.

It localises to the cell membrane. The enzyme catalyses di-trans,octa-cis-undecaprenyl diphospho-N-acetyl-alpha-D-muramoyl-L-alanyl-D-glutamyl-meso-2,6-diaminopimeloyl-D-alanyl-D-alanine + UDP-N-acetyl-alpha-D-glucosamine = di-trans,octa-cis-undecaprenyl diphospho-[N-acetyl-alpha-D-glucosaminyl-(1-&gt;4)]-N-acetyl-alpha-D-muramoyl-L-alanyl-D-glutamyl-meso-2,6-diaminopimeloyl-D-alanyl-D-alanine + UDP + H(+). It participates in cell wall biogenesis; peptidoglycan biosynthesis. In terms of biological role, cell wall formation. Catalyzes the transfer of a GlcNAc subunit on undecaprenyl-pyrophosphoryl-MurNAc-pentapeptide (lipid intermediate I) to form undecaprenyl-pyrophosphoryl-MurNAc-(pentapeptide)GlcNAc (lipid intermediate II). The polypeptide is UDP-N-acetylglucosamine--N-acetylmuramyl-(pentapeptide) pyrophosphoryl-undecaprenol N-acetylglucosamine transferase (Rubrobacter xylanophilus (strain DSM 9941 / JCM 11954 / NBRC 16129 / PRD-1)).